Reading from the N-terminus, the 475-residue chain is Fez family zinc finger protein 1 (475 aa).

Residues 28 to 43 (PLAFSIERIMARTPEP) carry the Engrailed homology 1 repressor motif. 6 consecutive C2H2-type zinc fingers follow at residues 260–282 (FTCE…MPVH), 288–310 (FVCK…KIIH), 316–338 (HKCN…TRIH), 344–366 (FVCE…KLTH), 372–394 (FKCN…MHTH), and 400–423 (FTCP…RKLH). Residues 428 to 475 (GLARTPAGEPGTEPPPPLPQQPPMTLPPLQPPLPTPGPLQPGLHQGHQ) form a disordered region. The span at 439-466 (TEPPPPLPQQPPMTLPPLQPPLPTPGPL) shows a compositional bias: pro residues.

The protein belongs to the krueppel C2H2-type zinc-finger protein family. Expressed in brain. Little or no expression in other tissues. Overexpressed specifically in gastric cancers. A 2- to 20-fold increase is found in over 50% of gastric cancer tissues.

It is found in the nucleus. Its function is as follows. Transcription repressor. Involved in the axonal projection and proper termination of olfactory sensory neurons (OSN). Plays a role in rostro-caudal patterning of the diencephalon and in prethalamic formation. Expression is required in OSN to cell-autonomously regulate OSN axon projections. Regulates non-cell-autonomously the layer formation of the olfactory bulb development and the interneurons. May be required for correct rostral migration of the interneuron progenitors. This is Fez family zinc finger protein 1 (FEZF1) from Homo sapiens (Human).